Here is an 819-residue protein sequence, read N- to C-terminus: Zinc finger protein with KRAB and SCAN domains 5 (819 aa).

An SCAN box domain is found at Gln-51 to Leu-132. Residues Lys-214, Lys-246, and Lys-302 each participate in a glycyl lysine isopeptide (Lys-Gly) (interchain with G-Cter in SUMO2) cross-link. The 72-residue stretch at Glu-216–Lys-287 folds into the KRAB domain. Disordered stretches follow at residues Ser-236–Asn-263 and Glu-283–Gly-340. The segment covering Leu-240–Cys-249 has biased composition (basic and acidic residues). The segment covering Val-329 to Gly-340 has biased composition (basic and acidic residues). 9 consecutive C2H2-type zinc fingers follow at residues His-341–His-363, Phe-369–His-391, Tyr-397–His-419, Tyr-425–His-447, His-540–His-562, Phe-568–His-590, Tyr-596–His-618, Phe-624–His-646, and His-652–His-674. Lys-700 participates in a covalent cross-link: Glycyl lysine isopeptide (Lys-Gly) (interchain with G-Cter in SUMO2). C2H2-type zinc fingers lie at residues Tyr-708–His-730, His-764–His-786, and Leu-792–His-814. A Glycyl lysine isopeptide (Lys-Gly) (interchain with G-Cter in SUMO2) cross-link involves residue Lys-776.

It belongs to the krueppel C2H2-type zinc-finger protein family. In terms of tissue distribution, testis specific.

It is found in the nucleus. Functionally, may be involved in transcriptional regulation. This Mus musculus (Mouse) protein is Zinc finger protein with KRAB and SCAN domains 5 (Zkscan5).